A 1000-amino-acid polypeptide reads, in one-letter code: Kinesin-like protein CIN8 (1000 aa).

Residues 1–26 show a composition bias toward polar residues; that stretch reads MPAENQNTGQDRSSNSISKNGNSQVG. A disordered region spans residues 1 to 28; sequence MPAENQNTGQDRSSNSISKNGNSQVGCH. The region spanning 36–477 is the Kinesin motor domain; it reads NITVAVRCRG…LEYASKAKNI (442 aa). 128 to 135 lines the ATP pocket; the sequence is GMTSTGKT. A compositionally biased stretch (low complexity) spans 220 to 242; it reads ANNTTSNSASSSRSNSRNSSPRS. Disordered stretches follow at residues 220 to 248 and 260 to 312; these read ANNT…DLTP and KSLP…PNDQ. The segment covering 261–276 has biased composition (polar residues); that stretch reads SLPNTIKQQYQQQQAV. Residues 277-301 show a composition bias toward low complexity; the sequence is NSRNNSSSNSGSTTNNASSNTNTNN. The span at 302–312 shows a compositional bias: polar residues; it reads GQRSSMAPNDQ. 2 coiled-coil regions span residues 518–615 and 860–904; these read MSQD…MALH and ISVM…IKNS. The interval 970–1000 is disordered; that stretch reads VISPKKHAIEDENKSSENVDNEGSRKMLKIE. A Phosphoserine modification is found at serine 972. Over residues 976-1000 the composition is skewed to basic and acidic residues; that stretch reads HAIEDENKSSENVDNEGSRKMLKIE.

It belongs to the TRAFAC class myosin-kinesin ATPase superfamily. Kinesin family. BimC subfamily.

The protein localises to the cytoplasm. The protein resides in the cytoskeleton. It localises to the spindle. Its subcellular location is the mitochondrion. Functionally, elongates the mitotic spindle by interacting with spindle microtubules to generate an outward force pushing spindle poles apart. Following spindle assembly, CIN8 and KIP1 apparently act to oppose a force, possibly generated by KAR3, that draws separated poles back together. The sequence is that of Kinesin-like protein CIN8 (CIN8) from Saccharomyces cerevisiae (strain ATCC 204508 / S288c) (Baker's yeast).